The primary structure comprises 242 residues: UPF0309 protein BOV_A0853 (242 aa).

The SIS domain maps to 30–209 (AADLIAAAAR…FADVAARLVG (180 aa)).

The protein belongs to the UPF0309 family.

The protein is UPF0309 protein BOV_A0853 of Brucella ovis (strain ATCC 25840 / 63/290 / NCTC 10512).